A 476-amino-acid polypeptide reads, in one-letter code: Glucose-1-phosphate adenylyltransferase (476 aa).

Alpha-D-glucose 1-phosphate-binding positions include Tyr114, Gly179, 194 to 195 (EK), and Ser212.

Belongs to the bacterial/plant glucose-1-phosphate adenylyltransferase family. In terms of assembly, homotetramer.

The catalysed reaction is alpha-D-glucose 1-phosphate + ATP + H(+) = ADP-alpha-D-glucose + diphosphate. Its pathway is glycan biosynthesis; glycogen biosynthesis. Involved in the biosynthesis of ADP-glucose, a building block required for the elongation reactions to produce glycogen. Catalyzes the reaction between ATP and alpha-D-glucose 1-phosphate (G1P) to produce pyrophosphate and ADP-Glc. The protein is Glucose-1-phosphate adenylyltransferase of Yersinia pestis.